Here is a 193-residue protein sequence, read N- to C-terminus: Orotate phosphoribosyltransferase (193 aa).

5-phospho-alpha-D-ribose 1-diphosphate is bound by residues Arg85, Lys89, and 111–119 (DDVLTTGKS). Orotate-binding residues include Thr115 and Arg143.

This sequence belongs to the purine/pyrimidine phosphoribosyltransferase family. PyrE subfamily. As to quaternary structure, homodimer. Mg(2+) is required as a cofactor.

It catalyses the reaction orotidine 5'-phosphate + diphosphate = orotate + 5-phospho-alpha-D-ribose 1-diphosphate. It functions in the pathway pyrimidine metabolism; UMP biosynthesis via de novo pathway; UMP from orotate: step 1/2. Catalyzes the transfer of a ribosyl phosphate group from 5-phosphoribose 1-diphosphate to orotate, leading to the formation of orotidine monophosphate (OMP). This chain is Orotate phosphoribosyltransferase, found in Pyrobaculum aerophilum (strain ATCC 51768 / DSM 7523 / JCM 9630 / CIP 104966 / NBRC 100827 / IM2).